The chain runs to 87 residues: Putative sodium channel toxin Ts38 (87 aa).

A signal peptide spans 1–22 (MKHLKFYSILFLFSIFVYKVNA). Cystine bridges form between Cys-42/Cys-65, Cys-51/Cys-72, and Cys-55/Cys-74.

Belongs to the long (3 C-C) scorpion toxin superfamily. Sodium channel inhibitor family. As to expression, expressed by the venom gland.

The protein resides in the secreted. In terms of biological role, putative sodium channel toxin. The protein is Putative sodium channel toxin Ts38 of Tityus serrulatus (Brazilian scorpion).